The chain runs to 204 residues: Altered inheritance of mitochondria protein 20 (204 aa).

Residues V6–F26 form a helical membrane-spanning segment.

The protein belongs to the SKG1 family.

The protein localises to the vacuole membrane. In terms of biological role, involved in cell cycle progression and surviving DNA damage. The chain is Altered inheritance of mitochondria protein 20 (AIM20) from Saccharomyces cerevisiae (strain RM11-1a) (Baker's yeast).